Here is a 632-residue protein sequence, read N- to C-terminus: tRNA uridine 5-carboxymethylaminomethyl modification enzyme MnmG (632 aa).

FAD contacts are provided by residues 16-21 (GAGHAG), Val128, and Ser183. The interval 206 to 225 (PRVNGNTIDYSKTEEEPGDK) is disordered. Residues 216-225 (SKTEEEPGDK) are compositionally biased toward basic and acidic residues. Residue 277–291 (GPRYCPSIEDKVVRF) participates in NAD(+) binding. Gln374 is a binding site for FAD.

It belongs to the MnmG family. As to quaternary structure, homodimer. Heterotetramer of two MnmE and two MnmG subunits. It depends on FAD as a cofactor.

It is found in the cytoplasm. In terms of biological role, NAD-binding protein involved in the addition of a carboxymethylaminomethyl (cmnm) group at the wobble position (U34) of certain tRNAs, forming tRNA-cmnm(5)s(2)U34. The chain is tRNA uridine 5-carboxymethylaminomethyl modification enzyme MnmG from Lactobacillus acidophilus (strain ATCC 700396 / NCK56 / N2 / NCFM).